The chain runs to 354 residues: Serum paraoxonase/lactonase 3 (354 aa).

The cysteines at positions 42 and 352 are disulfide-linked. A glycan (N-linked (GlcNAc...) asparagine) is linked at N50. Ca(2+)-binding residues include E53 and D54. H114 serves as the catalytic Proton acceptor. I116 is a Ca(2+) binding site. S165 bears the Phosphoserine mark. Ca(2+) contacts are provided by N167, D168, N223, D268, and N269. 2 N-linked (GlcNAc...) asparagine glycosylation sites follow: N269 and N323.

This sequence belongs to the paraoxonase family. Homodimer. The cofactor is Ca(2+). In terms of processing, glycosylated. The signal sequence is not cleaved.

The protein resides in the secreted. It localises to the extracellular space. It carries out the reaction a phenyl acetate + H2O = a phenol + acetate + H(+). The enzyme catalyses An aryl dialkyl phosphate + H2O = dialkyl phosphate + an aryl alcohol.. The catalysed reaction is an N-acyl-L-homoserine lactone + H2O = an N-acyl-L-homoserine + H(+). In terms of biological role, has low activity towards the organophosphate paraxon and aromatic carboxylic acid esters. Rapidly hydrolyzes lactones such as statin prodrugs (e.g. lovastatin). Hydrolyzes aromatic lactones and 5- or 6-member ring lactones with aliphatic substituents but not simple lactones or those with polar substituents. This chain is Serum paraoxonase/lactonase 3 (Pon3), found in Mus musculus (Mouse).